We begin with the raw amino-acid sequence, 1322 residues long: Mediator of RNA polymerase II transcription subunit 12 (1322 aa).

Residues 1-21 (MSPSKYLLTPPEELHPLTDSN) form a disordered region.

It belongs to the Mediator complex subunit 12 family. In terms of assembly, component of the SRB8-11 complex, which itself associates with the Mediator complex.

The protein resides in the nucleus. Component of the SRB8-11 complex. The SRB8-11 complex is a regulatory module of the Mediator complex which is itself involved in regulation of basal and activated RNA polymerase II-dependent transcription. The SRB8-11 complex may be involved in the transcriptional repression of a subset of genes regulated by Mediator. It may inhibit the association of the Mediator complex with RNA polymerase II to form the holoenzyme complex. The protein is Mediator of RNA polymerase II transcription subunit 12 (SRB8) of Kluyveromyces lactis (strain ATCC 8585 / CBS 2359 / DSM 70799 / NBRC 1267 / NRRL Y-1140 / WM37) (Yeast).